The primary structure comprises 151 residues: C-C motif chemokine 25 (151 aa).

Positions 1–22 are cleaved as a signal peptide; the sequence is MNLWLLVCLVASLMGAWSTVHT. 2 disulfide bridges follow: C29–C57 and C30–C73. Residues 94-151 are disordered; it reads THSKQHLGSRRNLQDSHLGGQRSNTGMSRLAHSKSKSSRSTRSNKKKTSFLNMANPGP. Over residues 124–141 the composition is skewed to basic residues; that stretch reads AHSKSKSSRSTRSNKKKT.

This sequence belongs to the intercrine beta (chemokine CC) family.

Its subcellular location is the secreted. Functionally, potentially involved in T-cell development. Recombinant protein shows chemotactic activity on thymocytes, macrophages, THP-1 cells, and dendritics cells but is inactive on peripheral blood lymphocytes and neutrophils. Binds to CCR9. Binds to atypical chemokine receptor ACKR4 and mediates the recruitment of beta-arrestin (ARRB1/2) to ACKR4. The polypeptide is C-C motif chemokine 25 (CCL25) (Canis lupus familiaris (Dog)).